The following is a 39-amino-acid chain: Cytochrome b559 subunit beta (39 aa).

A helical transmembrane segment spans residues 14 to 30; that stretch reads WLAVHGLAVPTVSFLGS. His18 contributes to the heme binding site.

The protein belongs to the PsbE/PsbF family. Heterodimer of an alpha subunit and a beta subunit. PSII is composed of 1 copy each of membrane proteins PsbA, PsbB, PsbC, PsbD, PsbE, PsbF, PsbH, PsbI, PsbJ, PsbK, PsbL, PsbM, PsbT, PsbX, PsbY, PsbZ, Psb30/Ycf12, at least 3 peripheral proteins of the oxygen-evolving complex and a large number of cofactors. It forms dimeric complexes. Heme b serves as cofactor.

The protein localises to the plastid. It localises to the chloroplast thylakoid membrane. Its function is as follows. This b-type cytochrome is tightly associated with the reaction center of photosystem II (PSII). PSII is a light-driven water:plastoquinone oxidoreductase that uses light energy to abstract electrons from H(2)O, generating O(2) and a proton gradient subsequently used for ATP formation. It consists of a core antenna complex that captures photons, and an electron transfer chain that converts photonic excitation into a charge separation. In Lotus japonicus (Lotus corniculatus var. japonicus), this protein is Cytochrome b559 subunit beta.